The primary structure comprises 680 residues: DNA-directed RNA polymerase subunit beta' (680 aa).

Zn(2+)-binding residues include C69, C71, C87, and C90. D489, D491, and D493 together coordinate Mg(2+).

The protein belongs to the RNA polymerase beta' chain family. RpoC1 subfamily. In terms of assembly, in plastids the minimal PEP RNA polymerase catalytic core is composed of four subunits: alpha, beta, beta', and beta''. When a (nuclear-encoded) sigma factor is associated with the core the holoenzyme is formed, which can initiate transcription. The cofactor is Mg(2+). Zn(2+) is required as a cofactor.

It is found in the plastid. It localises to the chloroplast. It catalyses the reaction RNA(n) + a ribonucleoside 5'-triphosphate = RNA(n+1) + diphosphate. DNA-dependent RNA polymerase catalyzes the transcription of DNA into RNA using the four ribonucleoside triphosphates as substrates. The chain is DNA-directed RNA polymerase subunit beta' from Draba nemorosa (Woodland whitlowgrass).